The sequence spans 332 residues: 2,3-diketo-L-gulonate reductase (332 aa).

The active-site Proton donor is H44. NAD(+) contacts are provided by residues 168-174 (ITMIDMS), 224-225 (WK), and 304-306 (GHE).

The protein belongs to the LDH2/MDH2 oxidoreductase family. DlgD subfamily. In terms of assembly, homodimer.

Its subcellular location is the cytoplasm. It catalyses the reaction 3-dehydro-L-gulonate + NAD(+) = 2,3-dioxo-L-gulonate + NADH + H(+). The enzyme catalyses 3-dehydro-L-gulonate + NADP(+) = 2,3-dioxo-L-gulonate + NADPH + H(+). Its function is as follows. Catalyzes the reduction of 2,3-diketo-L-gulonate in the presence of NADH, to form 3-keto-L-gulonate. This chain is 2,3-diketo-L-gulonate reductase, found in Citrobacter koseri (strain ATCC BAA-895 / CDC 4225-83 / SGSC4696).